A 205-amino-acid chain; its full sequence is Small ribosomal subunit protein uS3 (205 aa).

A KH type-2 domain is found at 12–80 (VRQFLAKELA…PAQINIAEVR (69 aa)).

Belongs to the universal ribosomal protein uS3 family. In terms of assembly, part of the 30S ribosomal subunit. Forms a tight complex with proteins S10 and S14.

Functionally, binds the lower part of the 30S subunit head. Binds mRNA in the 70S ribosome, positioning it for translation. In Buchnera aphidicola subsp. Acyrthosiphon kondoi (Acyrthosiphon kondoi symbiotic bacterium), this protein is Small ribosomal subunit protein uS3.